We begin with the raw amino-acid sequence, 100 residues long: Urease subunit gamma (100 aa).

The protein belongs to the urease gamma subunit family. Heterotrimer of UreA (gamma), UreB (beta) and UreC (alpha) subunits. Three heterotrimers associate to form the active enzyme.

The protein resides in the cytoplasm. The catalysed reaction is urea + 2 H2O + H(+) = hydrogencarbonate + 2 NH4(+). It participates in nitrogen metabolism; urea degradation; CO(2) and NH(3) from urea (urease route): step 1/1. In Prochlorococcus marinus (strain MIT 9215), this protein is Urease subunit gamma.